A 742-amino-acid polypeptide reads, in one-letter code: Envelope glycoprotein H (742 aa).

The first 23 residues, 1-23 (MRPGLPSYLIILAVCLFSHLLSS), serve as a signal peptide directing secretion. Residues 24 to 719 (RYGAEAVSEP…VVDATDSRLL (696 aa)) are Virion surface-facing. Asn55, Asn62, Asn67, and Asn192 each carry an N-linked (GlcNAc...) asparagine; by host glycan. The cysteines at positions 195 and 211 are disulfide-linked. The segment at 217 to 280 (YLIDELRYVK…QTEKHELLVL (64 aa)) is interaction with gL. 3 cysteine pairs are disulfide-bonded: Cys330-Cys383, Cys495-Cys522, and Cys571-Cys624. Residues Asn641 and Asn700 are each glycosylated (N-linked (GlcNAc...) asparagine; by host). A helical membrane pass occupies residues 720-740 (MMSVYALSAIIGIYLLYRMLK). Topologically, residues 741–742 (TC) are intravirion.

This sequence belongs to the herpesviridae glycoprotein H family. As to quaternary structure, interacts with glycoprotein L (gL); this interaction is necessary for the correct processing and cell surface expression of gH. The heterodimer gH/gL seems to interact with gB trimers during fusion. Forms the envelope pentamer complex (PC) composed of gH, gL, UL128, UL130, and UL131A. The pentamer interacts with host NRP2. Forms the envelope trimer complex composed of gH, gL, and gO. The trimer interacts with host PDGFRA. The trimer also interacts with host EPHA2. The trimer also interacts with host TGFBR3. Interacts with UL116. N-glycosylated, O-glycosylated, and sialylated.

It localises to the virion membrane. The protein localises to the host cell membrane. It is found in the host endosome membrane. Functionally, the heterodimer glycoprotein H-glycoprotein L is required for the fusion of viral and plasma membranes leading to virus entry into the host cell. Following initial binding to host receptor, membrane fusion is mediated by the fusion machinery composed of gB and the heterodimer gH/gL. May also be involved in the fusion between the virion envelope and the outer nuclear membrane during virion morphogenesis. In human cytomegalovirus, forms two distincts complexes to mediate viral entry, a trimer and a pentamer at the surface of the virion envelope. The gH-gL-gO trimer is required for infection in fibroblasts by interacting with host PDGFRA, and in glioblastoma cells by interacting with host EPHA2. Thsi trimer may also be required in other cell types using host TGFBR3. The gH-gL-UL128-UL130-UL131A pentamer is essential for viral entry in epithelial, endothelial and myeloid cells via interaction with host NRP2. This Human cytomegalovirus (strain Merlin) (HHV-5) protein is Envelope glycoprotein H.